An 89-amino-acid polypeptide reads, in one-letter code: Small ribosomal subunit protein uS15 (89 aa).

The span at 1–10 shows a compositional bias: basic and acidic residues; sequence MSITAERKAE. Residues 1–24 are disordered; that stretch reads MSITAERKAEVIQGNANKAGDTGS.

Belongs to the universal ribosomal protein uS15 family. Part of the 30S ribosomal subunit. Forms a bridge to the 50S subunit in the 70S ribosome, contacting the 23S rRNA.

Functionally, one of the primary rRNA binding proteins, it binds directly to 16S rRNA where it helps nucleate assembly of the platform of the 30S subunit by binding and bridging several RNA helices of the 16S rRNA. Forms an intersubunit bridge (bridge B4) with the 23S rRNA of the 50S subunit in the ribosome. The polypeptide is Small ribosomal subunit protein uS15 (Rhodopseudomonas palustris (strain BisB5)).